The following is a 484-amino-acid chain: Schwannomin-interacting protein 1 (484 aa).

Residues 1–28 (MERSEQRVRAAWDCDPGKQADRDYREDG) are compositionally biased toward basic and acidic residues. Disordered regions lie at residues 1-74 (MERS…VSAL), 86-220 (KKVI…PPMD), 232-258 (QFRE…ERES), and 305-350 (SGSD…ESLD). The span at 33–67 (SDAGSSSSSRASSQSNSTKVTPCSECKSSSSPGGS) shows a compositional bias: low complexity. Over residues 92–106 (WAPEEDGEEEEEEDD) the composition is skewed to acidic residues. Residues 107-120 (RGYRDDGCPAREPG) show a composition bias toward basic and acidic residues. Residues 123–137 (SARIGSSGSGSRSAA) are compositionally biased toward low complexity. The segment covering 150–159 (HPHDPQDLRH) has biased composition (basic and acidic residues). The span at 239–252 (RNQGQARTNSTSAQ) shows a compositional bias: polar residues. The span at 306–320 (GSDKDSDADDSKTET) shows a compositional bias: basic and acidic residues. Over residues 321–332 (SLDTPLSPMSKQ) the composition is skewed to polar residues. Residues 341-350 (TTEEESESLD) show a composition bias toward acidic residues. The stretch at 421-455 (IGQLQVIVNDLHSQIESLNEELVQLLLIRDELHTE) forms a coiled coil.

It belongs to the SCHIP1 family. In terms of assembly, homooligomer (via coiled coil domain). Interacts with NF2; the interaction is direct. Interacts with ANK3.

The protein is Schwannomin-interacting protein 1 of Mus musculus (Mouse).